The sequence spans 630 residues: tRNA uridine 5-carboxymethylaminomethyl modification enzyme MnmG (630 aa).

An FAD-binding site is contributed by 13-18; that stretch reads GGGHAG. Position 273-287 (273-287) interacts with NAD(+); the sequence is GPRYCPSIEDKIHRF.

This sequence belongs to the MnmG family. In terms of assembly, homodimer. Heterotetramer of two MnmE and two MnmG subunits. Requires FAD as cofactor.

Its subcellular location is the cytoplasm. Its function is as follows. NAD-binding protein involved in the addition of a carboxymethylaminomethyl (cmnm) group at the wobble position (U34) of certain tRNAs, forming tRNA-cmnm(5)s(2)U34. This is tRNA uridine 5-carboxymethylaminomethyl modification enzyme MnmG from Pseudomonas putida (strain ATCC 700007 / DSM 6899 / JCM 31910 / BCRC 17059 / LMG 24140 / F1).